Consider the following 72-residue polypeptide: Large ribosomal subunit protein bL31 (72 aa).

Residues Cys-16, Cys-18, Cys-37, and Cys-40 each contribute to the Zn(2+) site.

The protein belongs to the bacterial ribosomal protein bL31 family. Type A subfamily. Part of the 50S ribosomal subunit. Requires Zn(2+) as cofactor.

Functionally, binds the 23S rRNA. The sequence is that of Large ribosomal subunit protein bL31 from Hahella chejuensis (strain KCTC 2396).